We begin with the raw amino-acid sequence, 398 residues long: Ribosomal RNA large subunit methyltransferase I (398 aa).

Residues 2 to 79 (SVRLVLAKGR…LSESIDIAFF (78 aa)) enclose the PUA domain.

The protein belongs to the methyltransferase superfamily. RlmI family.

It is found in the cytoplasm. It carries out the reaction cytidine(1962) in 23S rRNA + S-adenosyl-L-methionine = 5-methylcytidine(1962) in 23S rRNA + S-adenosyl-L-homocysteine + H(+). In terms of biological role, specifically methylates the cytosine at position 1962 (m5C1962) of 23S rRNA. This Shigella dysenteriae serotype 1 (strain Sd197) protein is Ribosomal RNA large subunit methyltransferase I.